Consider the following 351-residue polypeptide: Ribosomal RNA small subunit methyltransferase H (351 aa).

S-adenosyl-L-methionine contacts are provided by residues 48–50 (GGY), aspartate 67, phenylalanine 94, aspartate 115, and glutamine 122. Residues 274–351 (AAQASRHVPG…PAPQGRGPRR (78 aa)) are disordered.

This sequence belongs to the methyltransferase superfamily. RsmH family.

Its subcellular location is the cytoplasm. It catalyses the reaction cytidine(1402) in 16S rRNA + S-adenosyl-L-methionine = N(4)-methylcytidine(1402) in 16S rRNA + S-adenosyl-L-homocysteine + H(+). Its function is as follows. Specifically methylates the N4 position of cytidine in position 1402 (C1402) of 16S rRNA. The sequence is that of Ribosomal RNA small subunit methyltransferase H from Methylorubrum extorquens (strain ATCC 14718 / DSM 1338 / JCM 2805 / NCIMB 9133 / AM1) (Methylobacterium extorquens).